A 184-amino-acid polypeptide reads, in one-letter code: MREYKLVVLGSGGVGKSALTVQFVQGIFVEKYDPTIEDSYRKQVEVDCQPCMLEILDTAGTEQFTAMRDLYMKNGQGFALVYSITAQSTFNDLQDLREQILRVKDTEDVPMILVGNKCDLEDERVVGKEQGQNLARQWNNCAFLESSAKSKINVNEIFYDLVRQINRKAPVEKCKKKKSQCTLL.

10-17 (GSGGVGKS) is a GTP binding site. Residues 32–40 (YDPTIEDSY) carry the Effector region motif. Residues 57-61 (DTAGT) and 116-119 (NKCD) each bind GTP. Cysteine 181 is subject to Cysteine methyl ester. Cysteine 181 carries S-geranylgeranyl cysteine lipidation. The propeptide at 182–184 (TLL) is removed in mature form.

This sequence belongs to the small GTPase superfamily. Ras family.

The protein resides in the cell membrane. It catalyses the reaction GTP + H2O = GDP + phosphate + H(+). The protein is Ras-related protein O-Krev of Diplobatis ommata (Ocellated electric ray).